A 151-amino-acid polypeptide reads, in one-letter code: D-aminoacyl-tRNA deacylase (151 aa).

Positions 137 to 138 (GP) match the Gly-cisPro motif, important for rejection of L-amino acids motif.

It belongs to the DTD family. In terms of assembly, homodimer.

It localises to the cytoplasm. It catalyses the reaction glycyl-tRNA(Ala) + H2O = tRNA(Ala) + glycine + H(+). It carries out the reaction a D-aminoacyl-tRNA + H2O = a tRNA + a D-alpha-amino acid + H(+). Its function is as follows. An aminoacyl-tRNA editing enzyme that deacylates mischarged D-aminoacyl-tRNAs. Also deacylates mischarged glycyl-tRNA(Ala), protecting cells against glycine mischarging by AlaRS. Acts via tRNA-based rather than protein-based catalysis; rejects L-amino acids rather than detecting D-amino acids in the active site. By recycling D-aminoacyl-tRNA to D-amino acids and free tRNA molecules, this enzyme counteracts the toxicity associated with the formation of D-aminoacyl-tRNA entities in vivo and helps enforce protein L-homochirality. This chain is D-aminoacyl-tRNA deacylase, found in Fusobacterium nucleatum subsp. nucleatum (strain ATCC 25586 / DSM 15643 / BCRC 10681 / CIP 101130 / JCM 8532 / KCTC 2640 / LMG 13131 / VPI 4355).